Here is a 443-residue protein sequence, read N- to C-terminus: Ribosomal protein uS12 methylthiotransferase RimO (443 aa).

Residues Pro-10–Pro-120 form the MTTase N-terminal domain. [4Fe-4S] cluster-binding residues include Cys-19, Cys-55, Cys-84, Cys-152, Cys-156, and Cys-159. Positions Leu-138–Arg-375 constitute a Radical SAM core domain. The TRAM domain occupies Ala-378–Leu-443.

It belongs to the methylthiotransferase family. RimO subfamily. Requires [4Fe-4S] cluster as cofactor.

Its subcellular location is the cytoplasm. The catalysed reaction is L-aspartate(89)-[ribosomal protein uS12]-hydrogen + (sulfur carrier)-SH + AH2 + 2 S-adenosyl-L-methionine = 3-methylsulfanyl-L-aspartate(89)-[ribosomal protein uS12]-hydrogen + (sulfur carrier)-H + 5'-deoxyadenosine + L-methionine + A + S-adenosyl-L-homocysteine + 2 H(+). Its function is as follows. Catalyzes the methylthiolation of an aspartic acid residue of ribosomal protein uS12. This Alkalilimnicola ehrlichii (strain ATCC BAA-1101 / DSM 17681 / MLHE-1) protein is Ribosomal protein uS12 methylthiotransferase RimO.